Here is a 246-residue protein sequence, read N- to C-terminus: Indole-3-glycerol phosphate synthase (246 aa).

This sequence belongs to the TrpC family.

The catalysed reaction is 1-(2-carboxyphenylamino)-1-deoxy-D-ribulose 5-phosphate + H(+) = (1S,2R)-1-C-(indol-3-yl)glycerol 3-phosphate + CO2 + H2O. It functions in the pathway amino-acid biosynthesis; L-tryptophan biosynthesis; L-tryptophan from chorismate: step 4/5. The sequence is that of Indole-3-glycerol phosphate synthase from Sulfurisphaera tokodaii (strain DSM 16993 / JCM 10545 / NBRC 100140 / 7) (Sulfolobus tokodaii).